We begin with the raw amino-acid sequence, 905 residues long: MTDNNSSNLVPVNIEDEMKVSYLDYAMSVIVSRAIPDVRDGLKPVHRRIIYSMHEAGNHANRAYRKSARIVGDVMGKYHPHGDSAIYDSLVRMAQDFSLRLPLVDGQGNFGSLDGDAAAAMRYTESRMAKVAHKLIEDIDKETVSFNPNYDGSEEEPSVLPSMFPNLLVNGSGGIAVGMATNIPPHNLGEVIDACCLYVDNNDIEILDLLEVVKGPDFPTSGIILGVNGIKSAYLTGRGSIAIRGRAEIENLGNGRQAIIITEIPYMVNKARLVEKIAEMVKEKRIEGISDLRDESNKNGIRIYIELKKDIVAEVVLNQIYSCTQLQTSFGVIMLALKDGLPKVMNLKEVIAAFVSFREVVITNRTIYLLNKARDKAHILLGLTIAVSNIDEIIRIIKAASDPNAAKQELMARSWDALNILPLVKLVDDKAMLNEEGKCSFTEAQAKAILEMRLQRLTAMEKNKLEEDLKNLATEITEYLNILGSRERLLEILKEELIKVKEEFATPRLTSIEFGEFDQDIEDLIQREEMVVTVTLGGYIKRVPLSSYRAQKRGGKGRSGLSMRDEDITTQVFVGSTHTPMLFFSNIGQVYSLKLYKLPLSNPQGKGRPMVNILPLKGDEHITNIMPLPENQDEWDNLNIMFATAKGNIRRSDLLDFKKIQSNGKIAIRLDEDDKLIDVKPCKEDEHILLATKSGKALRFPVESLRVIKSRTSDGVRGMRLAEDDSVISMTVLKGIKATREERDAYLSVSWEKRLEIAKGEEFNSEELGVDLTAESILEMANSEEFILTVTENGFGKRSSAYGYRITDRGGSGIINMDINDKTGLVVGVMPVKMDDELMLITNSGKLIRCKLETVRITGRNTSGVTLFRLDDGEKVVSASLIAESSDDNEEDSEFEEEVAEEGSE.

The Topo IIA-type catalytic domain occupies 35-524 (IPDVRDGLKP…GEFDQDIEDL (490 aa)). Tyrosine 123 serves as the catalytic O-(5'-phospho-DNA)-tyrosine intermediate. A GyrA-box motif is present at residues 551–557 (QKRGGKG). Positions 882 to 905 (IAESSDDNEEDSEFEEEVAEEGSE) are disordered. A compositionally biased stretch (acidic residues) spans 885-905 (SSDDNEEDSEFEEEVAEEGSE).

The protein belongs to the type II topoisomerase GyrA/ParC subunit family. As to quaternary structure, heterotetramer, composed of two GyrA and two GyrB chains. In the heterotetramer, GyrA contains the active site tyrosine that forms a transient covalent intermediate with DNA, while GyrB binds cofactors and catalyzes ATP hydrolysis.

It localises to the cytoplasm. It carries out the reaction ATP-dependent breakage, passage and rejoining of double-stranded DNA.. Its function is as follows. A type II topoisomerase that negatively supercoils closed circular double-stranded (ds) DNA in an ATP-dependent manner to modulate DNA topology and maintain chromosomes in an underwound state. Negative supercoiling favors strand separation, and DNA replication, transcription, recombination and repair, all of which involve strand separation. Also able to catalyze the interconversion of other topological isomers of dsDNA rings, including catenanes and knotted rings. Type II topoisomerases break and join 2 DNA strands simultaneously in an ATP-dependent manner. This chain is DNA gyrase subunit A, found in Rickettsia bellii (strain RML369-C).